The chain runs to 434 residues: Glutamate-1-semialdehyde 2,1-aminomutase (434 aa).

Lysine 274 is subject to N6-(pyridoxal phosphate)lysine.

It belongs to the class-III pyridoxal-phosphate-dependent aminotransferase family. HemL subfamily. In terms of assembly, homodimer. Pyridoxal 5'-phosphate serves as cofactor.

It is found in the cytoplasm. It carries out the reaction (S)-4-amino-5-oxopentanoate = 5-aminolevulinate. It participates in porphyrin-containing compound metabolism; protoporphyrin-IX biosynthesis; 5-aminolevulinate from L-glutamyl-tRNA(Glu): step 2/2. The protein is Glutamate-1-semialdehyde 2,1-aminomutase of Acidovorax ebreus (strain TPSY) (Diaphorobacter sp. (strain TPSY)).